A 395-amino-acid chain; its full sequence is NAD(P)H-quinone oxidoreductase subunit H (395 aa).

It belongs to the complex I 49 kDa subunit family. In terms of assembly, NDH-1 can be composed of about 15 different subunits; different subcomplexes with different compositions have been identified which probably have different functions.

It is found in the cellular thylakoid membrane. The enzyme catalyses a plastoquinone + NADH + (n+1) H(+)(in) = a plastoquinol + NAD(+) + n H(+)(out). It catalyses the reaction a plastoquinone + NADPH + (n+1) H(+)(in) = a plastoquinol + NADP(+) + n H(+)(out). In terms of biological role, NDH-1 shuttles electrons from an unknown electron donor, via FMN and iron-sulfur (Fe-S) centers, to quinones in the respiratory and/or the photosynthetic chain. The immediate electron acceptor for the enzyme in this species is believed to be plastoquinone. Couples the redox reaction to proton translocation, and thus conserves the redox energy in a proton gradient. Cyanobacterial NDH-1 also plays a role in inorganic carbon-concentration. The protein is NAD(P)H-quinone oxidoreductase subunit H of Prochlorococcus marinus (strain MIT 9312).